We begin with the raw amino-acid sequence, 309 residues long: Homoserine kinase (309 aa).

Residue 91–101 participates in ATP binding; the sequence is PIGSGLGSSAC.

This sequence belongs to the GHMP kinase family. Homoserine kinase subfamily.

The protein resides in the cytoplasm. It catalyses the reaction L-homoserine + ATP = O-phospho-L-homoserine + ADP + H(+). The protein operates within amino-acid biosynthesis; L-threonine biosynthesis; L-threonine from L-aspartate: step 4/5. Catalyzes the ATP-dependent phosphorylation of L-homoserine to L-homoserine phosphate. This Salmonella arizonae (strain ATCC BAA-731 / CDC346-86 / RSK2980) protein is Homoserine kinase.